A 517-amino-acid polypeptide reads, in one-letter code: Meiosis-specific transcription factor mei4 (517 aa).

The fork-head DNA-binding region spans 81 to 172 (KPPCSYATLI…QNFVSVRLHR (92 aa)). The disordered stretch occupies residues 170-278 (LHRSHSTDSN…PNAETQEDLP (109 aa)). The segment covering 209–223 (NSFNSSTSTSGSSSN) has biased composition (low complexity). Residues 230 to 246 (NDASQPSNQDSSLNSNI) show a composition bias toward polar residues. The span at 254 to 270 (SNVQSNSSSSENVPKPN) shows a compositional bias: low complexity.

The protein resides in the nucleus. Functions as a meiosis-specific transcription factor. Binds to the 5'-GTAAAYA-3' consensus sequence of the promoter of the spo6 gene. This is Meiosis-specific transcription factor mei4 (mei4) from Schizosaccharomyces pombe (strain 972 / ATCC 24843) (Fission yeast).